Here is a 378-residue protein sequence, read N- to C-terminus: MLNDTLALAQMLIARRSPTPFDNGCQEILIDRLEKMGFDIERIRCGEVDNLWARRGTEAPLICFAGHTDVVPTGPLEKWESSPFDPVTRNGRLYGRGAADMKGSIAAFITSIEAFVAEHPDHNGSIALLITSDEEGIAVDGTVRVVEVLKARNELIDYCIVGEPTSVDKLGDMIKNGRRGSLSGTLTVKGIQGHIAYPHLAKNPIHLAAPAIAELANTEWDEGNEYFPPTTWQISNINGGTGATNVIPGEVTVLFNFRFSTASTIESLKARVHGILDRHNLEYDLQWENSGKPYLTPRGDLVDAVNAAIHTVTGIEPELSTSGGTSDGRFIADICPQVVELGPRNATIHKINEYVEVSDLDQLPRIYQLTMESLLLRK.

H67 is a Zn(2+) binding site. D69 is an active-site residue. D100 is a Zn(2+) binding site. The active-site Proton acceptor is E134. Zn(2+) contacts are provided by E135, E163, and H349.

Belongs to the peptidase M20A family. DapE subfamily. In terms of assembly, homodimer. Zn(2+) is required as a cofactor. Co(2+) serves as cofactor.

It carries out the reaction N-succinyl-(2S,6S)-2,6-diaminopimelate + H2O = (2S,6S)-2,6-diaminopimelate + succinate. Its pathway is amino-acid biosynthesis; L-lysine biosynthesis via DAP pathway; LL-2,6-diaminopimelate from (S)-tetrahydrodipicolinate (succinylase route): step 3/3. Catalyzes the hydrolysis of N-succinyl-L,L-diaminopimelic acid (SDAP), forming succinate and LL-2,6-diaminopimelate (DAP), an intermediate involved in the bacterial biosynthesis of lysine and meso-diaminopimelic acid, an essential component of bacterial cell walls. The polypeptide is Succinyl-diaminopimelate desuccinylase (Nitrosospira multiformis (strain ATCC 25196 / NCIMB 11849 / C 71)).